Reading from the N-terminus, the 234-residue chain is Viral Fc-gamma receptor-like protein IR11 (234 aa).

Residues 1–23 (MQTYSTPLTLVIVTSLFLFTTQG) form the signal peptide. The Ig-like V-type domain occupies 24–122 (SSSNAVEPTK…VKDTGVYLLQ (99 aa)). The Extracellular segment spans residues 24 to 182 (SSSNAVEPTK…DLKRQWSGLS (159 aa)). N-linked (GlcNAc...) asparagine; by host glycans are attached at residues Asn-57, Asn-105, and Asn-110. Residues 183–203 (LHCAWVSGMMIFVGALVICFL) traverse the membrane as a helical segment. The Cytoplasmic segment spans residues 204–234 (RSQRIGEQDAEHLRTDLDTEPLLLTVDGDLQ).

The protein belongs to the RL11 family.

It is found in the membrane. The protein is Viral Fc-gamma receptor-like protein IR11 of Homo sapiens (Human).